The sequence spans 318 residues: Death effector domain-containing protein (318 aa).

Positions S25–L103 constitute a DED domain. Residues P128 to Q191 form a disordered region.

Interacts with CASP8, CASP10, KRT8, KRT18, CASP3 and FADD. Homodimerizes and heterodimerizes with DEDD2. Exists predominantly in a mono- or diubiquitinated form. In terms of tissue distribution, ubiquitously expressed.

It is found in the cytoplasm. The protein resides in the nucleus. The protein localises to the nucleolus. Functionally, a scaffold protein that directs CASP3 to certain substrates and facilitates their ordered degradation during apoptosis. May also play a role in mediating CASP3 cleavage of KRT18. Regulates degradation of intermediate filaments during apoptosis. May play a role in the general transcription machinery in the nucleus and might be an important regulator of the activity of GTF3C3. Inhibits DNA transcription in vitro. The chain is Death effector domain-containing protein (Dedd) from Mus musculus (Mouse).